The primary structure comprises 528 residues: Tyrosine 3-monooxygenase (528 aa).

A Phosphoserine; by CaMK2 modification is found at serine 19. The segment at 33 to 65 (GQGAPGPSLTGSPWPGTAAPAASYTPTPRSPRF) is disordered. Residues 47–59 (PGTAAPAASYTPT) are compositionally biased toward low complexity. Phosphoserine is present on serine 62. Phosphoserine; by CaMK2 and PKA is present on serine 71. Histidine 361, histidine 366, and glutamate 406 together coordinate Fe cation. Serine 502 is modified (phosphoserine).

The protein belongs to the biopterin-dependent aromatic amino acid hydroxylase family. In terms of assembly, homotetramer. Interacts (when phosphorylated at Ser-19) with YWHAG; one YWHAG dimer binds to one TH tetramer and this interaction may influence the phosphorylation and dephosphorylation of other sites. Interacts with NT5DC2; the interaction results in reduced phosphorylation and decreased catalytic activity of TH. The cofactor is Fe(2+). Post-translationally, phosphorylated on Ser-19, Ser-62 and Ser-71 by several protein kinases with different site specificities. Phosphorylation at Ser-62 and Ser-71 leads to an increase of TH activity. Phosphorylation at Ser-71 activates the enzyme and also counteracts the feedback inhibition of TH by catecholamines. Phosphorylation of Ser-19 and Ser-62 triggers the proteasomal degradation of TH through the ubiquitin-proteasome pathway. Phosphorylation at Ser-62 facilitates transport of TH from the soma to the nerve terminals via the microtubule network. Phosphorylation at Ser-19 induces the high-affinity binding to the 14-3-3 protein YWHAG; this interaction may influence the phosphorylation and dephosphorylation of other sites. Ser-19 increases the phosphorylation at Ser-71 in a hierarchical manner, leading to increased activity. As to expression, mainly expressed in the brain and adrenal glands.

It localises to the cytoplasm. Its subcellular location is the perinuclear region. The protein localises to the nucleus. The protein resides in the cell projection. It is found in the axon. It localises to the cytoplasmic vesicle. Its subcellular location is the secretory vesicle. The protein localises to the synaptic vesicle. The enzyme catalyses (6R)-L-erythro-5,6,7,8-tetrahydrobiopterin + L-tyrosine + O2 = (4aS,6R)-4a-hydroxy-L-erythro-5,6,7,8-tetrahydrobiopterin + L-dopa. Its pathway is catecholamine biosynthesis; dopamine biosynthesis; dopamine from L-tyrosine: step 1/2. Its activity is regulated as follows. Inhibited in feedback fashion by the catecholamine neurotransmitters, especially by dopamine in competition with tetrahydrobiopterin. Phosphorylation of several Ser/Thr residues in the N-terminus regulates the catalytic activity. Ser-62 and Ser-71 are readily phosphorylated to activate the catalytic activity. A Cysteine modification induced by N-ethylmaleimide (NEM), inhibits tyrosine 3-monooxygenase activity through the modification of the Cys-207. In terms of biological role, catalyzes the conversion of L-tyrosine to L-dihydroxyphenylalanine (L-Dopa), the rate-limiting step in the biosynthesis of catecholamines, dopamine, noradrenaline, and adrenaline. Uses tetrahydrobiopterin and molecular oxygen to convert tyrosine to L-Dopa. In addition to tyrosine, is able to catalyze the hydroxylation of phenylalanine and tryptophan with lower specificity. Positively regulates the regression of retinal hyaloid vessels during postnatal development. Its function is as follows. Lacks catalytic activity. This is Tyrosine 3-monooxygenase from Homo sapiens (Human).